The following is a 274-amino-acid chain: Thiazole synthase (274 aa).

Residue K115 is the Schiff-base intermediate with DXP of the active site. Residues G176, 202–203, and 224–225 contribute to the 1-deoxy-D-xylulose 5-phosphate site; these read AG and NS.

This sequence belongs to the ThiG family. In terms of assembly, homotetramer. Forms heterodimers with either ThiH or ThiS.

It localises to the cytoplasm. It catalyses the reaction [ThiS sulfur-carrier protein]-C-terminal-Gly-aminoethanethioate + 2-iminoacetate + 1-deoxy-D-xylulose 5-phosphate = [ThiS sulfur-carrier protein]-C-terminal Gly-Gly + 2-[(2R,5Z)-2-carboxy-4-methylthiazol-5(2H)-ylidene]ethyl phosphate + 2 H2O + H(+). The protein operates within cofactor biosynthesis; thiamine diphosphate biosynthesis. Its function is as follows. Catalyzes the rearrangement of 1-deoxy-D-xylulose 5-phosphate (DXP) to produce the thiazole phosphate moiety of thiamine. Sulfur is provided by the thiocarboxylate moiety of the carrier protein ThiS. In vitro, sulfur can be provided by H(2)S. In Psychrobacter cryohalolentis (strain ATCC BAA-1226 / DSM 17306 / VKM B-2378 / K5), this protein is Thiazole synthase.